Consider the following 378-residue polypeptide: Transcription factor YY2 (378 aa).

The segment at 39–113 is mediates transcriptional activation; sequence LETSVGQTIE…DNLLFSPEFG (75 aa). Positions 243 to 378 are mediates transcriptional repression; it reads EFTSMRPKKP…LTHVKNKNDQ (136 aa). C2H2-type zinc fingers lie at residues 260–284, 289–311, 317–341, and 347–371; these read IACS…LHIH, HVCA…QLVH, YQCT…VRIH, and FVCP…ILTH.

The protein belongs to the YY transcription factor family. As to expression, weakly expressed by neuronal and glial cells in the cerebral cortex. Expressed by Purkinje cells and in the granular layers of the cerebellum. Expressed in all layers of spermatocytes in testis but not detected in sperm cells.

The protein localises to the nucleus. In terms of biological role, functions as a multifunctional transcription factor that may exhibit positive and negative control on a large number of genes. May antagonize YY1 and function in development and differentiation. The polypeptide is Transcription factor YY2 (Yy2) (Mus musculus (Mouse)).